The sequence spans 71 residues: Natterin-P (71 aa).

The signal sequence occupies residues 1–18 (MKLLVLLVTLLVLSWTSA). The propeptide occupies 19-45 (EDLGDQEILENNEDNNHESELGEPAAQ). Over residues 22–31 (GDQEILENNE) the composition is skewed to acidic residues. The disordered stretch occupies residues 22 to 54 (GDQEILENNEDNNHESELGEPAAQHTDDETSQL). Residues cysteine 62 and cysteine 71 are joined by a disulfide bond.

It belongs to the natterin family. As to expression, expressed by the venom gland.

Its subcellular location is the secreted. Its activity is regulated as follows. Inhibited by tissue-kallikrein inhibitor TKI and trasylol. Plasma kallikrein inhibitor PKSI527 and classical inhibitors of serine-, metallo-, thiol- or aspartate-peptidases evokes a minor inhibition of the peptide digestion. Its function is as follows. Shows nociceptive, edema-inducing and kininogenase activity with release of kallidin from low molecular weight kininogen. The cleavage occurs at Met-Lys bonds. The polypeptide is Natterin-P (Thalassophryne nattereri (Copper Joe toadfish)).